A 401-amino-acid polypeptide reads, in one-letter code: Nicotinate phosphoribosyltransferase (401 aa).

H221 bears the Phosphohistidine; by autocatalysis mark.

Belongs to the NAPRTase family. In terms of processing, transiently phosphorylated on a His residue during the reaction cycle. Phosphorylation strongly increases the affinity for substrates and increases the rate of nicotinate D-ribonucleotide production. Dephosphorylation regenerates the low-affinity form of the enzyme, leading to product release.

It catalyses the reaction nicotinate + 5-phospho-alpha-D-ribose 1-diphosphate + ATP + H2O = nicotinate beta-D-ribonucleotide + ADP + phosphate + diphosphate. The protein operates within cofactor biosynthesis; NAD(+) biosynthesis; nicotinate D-ribonucleotide from nicotinate: step 1/1. Catalyzes the synthesis of beta-nicotinate D-ribonucleotide from nicotinate and 5-phospho-D-ribose 1-phosphate at the expense of ATP. This Serratia proteamaculans (strain 568) protein is Nicotinate phosphoribosyltransferase.